A 193-amino-acid chain; its full sequence is Undecaprenyl-diphosphatase BcrC (193 aa).

4 helical membrane passes run 24–44 (VFIT…IWLF), 53–73 (VLYA…ITLV), 119–139 (IGWP…WVGH), and 140–160 (HYPV…FLFF).

It belongs to the BcrC/YbjG family.

It localises to the cell membrane. The enzyme catalyses di-trans,octa-cis-undecaprenyl diphosphate + H2O = di-trans,octa-cis-undecaprenyl phosphate + phosphate + H(+). In terms of biological role, catalyzes the dephosphorylation of undecaprenyl diphosphate (UPP). Confers resistance to bacitracin. The chain is Undecaprenyl-diphosphatase BcrC (bcrC) from Bacillus subtilis (strain 168).